A 397-amino-acid polypeptide reads, in one-letter code: METKEAIIHVIVATAEWGKDQLRYRRHRLAEFLAAQEETKEVIWVCPAPRAQGKEFQEVHSGIRQFAVKDLLQKKMFRFGRYTDVFYRHKLSPLLDELTPASANGERCCLWYTFPGFPLLSSLYSWDQVIYDCSDLWAAPISGRSNLLSEFRRKVIKSAELRIIQRADSITCSSDYLHKEVDKKLTAGREKVHTVENGVEYELFSANKQAPDRSILQGREGIVLGFIGGIKPKLDFKMIKEAALQKPDWTFLWVGPDATNGDVSFQELLRLPNVIWTGPADPKEVPHYMELIDIGIMPYKQSPYNQAVFPLKLFEFLAAGKPVVGTNLPSTSKMQKPYVYEYVEGDHPIDFIAACEKVLGQNGDETYKEMRRNIARTQDWNCLFRQIMKYTGIQKHA.

It belongs to the glycosyltransferase group 1 family.

The protein operates within cell wall biogenesis; teichuronic acid biosynthesis. The polypeptide is Putative teichuronic acid biosynthesis glycosyltransferase TuaH (tuaH) (Bacillus subtilis (strain 168)).